Here is a 393-residue protein sequence, read N- to C-terminus: MNLNKNLPTGTRDKLFREARAAYKIEQQVNHYFEKRGFKRIETPVIEFEDVFSSEHQADAKLYRFFDEKGRLTVLRPDMTLPIGRVVSTTGVMLPLKLSYSGKIFRANEDFGGEQNEQTQAGIEIIGYPSIKAEIECILIGIGVLNALEIPNFQIELGHAAIYRRVTNLLNLSETAEIDFRLLIQNKSLTGIKRFVADNPSTLDDFILALPRLFGPATAILKQAKNLTTDKGILTALREMETIVEAVSYTADISVDLGLVQDFHYYTGIIFRGYADLAADNFLSGGRYDHLLEQFTSASSPAVGLALNLDSLTTLQNRAGVIKKQVSTSLLIHYDLDAIQQAEKLMQETPNSELSFFETPTNAISFAKKWHIPAVIHVSRQGIQTIFQREADL.

It belongs to the class-II aminoacyl-tRNA synthetase family. HisZ subfamily. In terms of assembly, heteromultimer composed of HisG and HisZ subunits.

It localises to the cytoplasm. It functions in the pathway amino-acid biosynthesis; L-histidine biosynthesis; L-histidine from 5-phospho-alpha-D-ribose 1-diphosphate: step 1/9. Its function is as follows. Required for the first step of histidine biosynthesis. May allow the feedback regulation of ATP phosphoribosyltransferase activity by histidine. In Listeria monocytogenes serovar 1/2a (strain ATCC BAA-679 / EGD-e), this protein is ATP phosphoribosyltransferase regulatory subunit (hisZ).